The following is a 463-amino-acid chain: Glucagon-like peptide 1 receptor (463 aa).

Residues methionine 1–alanine 21 form the signal peptide. Residues glycine 22 to glutamate 139 are Extracellular-facing. Intrachain disulfides connect cysteine 46–cysteine 71, cysteine 62–cysteine 104, and cysteine 85–cysteine 126. N-linked (GlcNAc...) asparagine glycans are attached at residues asparagine 63, asparagine 82, and asparagine 115. Residues glutamine 140 to alanine 164 form a helical membrane-spanning segment. The Cytoplasmic portion of the chain corresponds to isoleucine 165 to threonine 175. Residues arginine 176–leucine 201 form a helical membrane-spanning segment. Residues lysine 202–arginine 227 are Extracellular-facing. A disulfide bond links cysteine 226 and cysteine 296. A helical transmembrane segment spans residues leucine 228–leucine 251. The Cytoplasmic portion of the chain corresponds to tyrosine 252 to isoleucine 265. Residues phenylalanine 266–leucine 290 form a helical membrane-spanning segment. Residues tyrosine 291–tyrosine 305 lie on the Extracellular side of the membrane. Residues tryptophan 306–isoleucine 328 form a helical membrane-spanning segment. At cysteine 329–arginine 348 the chain is on the cytoplasmic side. The residue at position 341 (cysteine 341) is an ADP-ribosylcysteine. At arginine 348 the chain carries ADP-ribosylarginine. Residues leucine 349–valine 370 traverse the membrane as a helical segment. The important for allosteric inhibitor binding stretch occupies residues serine 352–threonine 355. The Extracellular segment spans residues methionine 371–lysine 383. A helical membrane pass occupies residues leucine 384–phenylalanine 404. The Cytoplasmic portion of the chain corresponds to valine 405–serine 463.

It belongs to the G-protein coupled receptor 2 family. May form homodimers and heterodimers with GIPR. N-glycosylation enhances cell surface expression and lengthens receptor half-life by preventing degradation in the ER. As to expression, detected in pancreatic islets (at protein level). Detected in pancreatic islets and lungs.

Its subcellular location is the cell membrane. Functionally, G-protein coupled receptor for glucagon-like peptide 1 (GLP-1). Ligand binding triggers activation of a signaling cascade that leads to the activation of adenylyl cyclase and increased intracellular cAMP levels. Plays a role in regulating insulin secretion in response to GLP-1. The protein is Glucagon-like peptide 1 receptor (Glp1r) of Mus musculus (Mouse).